We begin with the raw amino-acid sequence, 291 residues long: Glycine--tRNA ligase alpha subunit (291 aa).

This sequence belongs to the class-II aminoacyl-tRNA synthetase family. In terms of assembly, tetramer of two alpha and two beta subunits.

Its subcellular location is the cytoplasm. It carries out the reaction tRNA(Gly) + glycine + ATP = glycyl-tRNA(Gly) + AMP + diphosphate. This is Glycine--tRNA ligase alpha subunit from Rhizorhabdus wittichii (strain DSM 6014 / CCUG 31198 / JCM 15750 / NBRC 105917 / EY 4224 / RW1) (Sphingomonas wittichii).